The chain runs to 599 residues: MSISEKPLSELLRPKDFEDFVGQDHIFGNKGILRRTLKTGNMFSSILYGPPGSGKTSVFSLLKRYFNGEVVYLSSTVHGVSEIKNVLKRGEQLRKYGKKLLLFLDEIHRLNKNQQMVLVSHVERGDIVLVATTTENPSFVIVPALLSRCRILYFKKLSDEDLMKILKKATEVLNIDLEESVEKAIVRHSEGDARKLLNTLEIVHQAFKNKRVTLEDLETLLGNVSGYTKESHYDFASAFIKSMRGSDPNAAVYYLVKMIEMGEDPRFIARRMIIFASEDVGLADPNALHIAVSTSIAVEHVGLPECLMNLVECAVYLSLAPKSNSVYLAMKKVQELPVEDVPLFLRNPVTEEMKKRGYGEGYLYPHDFGGFVKTNYLPEKLKNEVIFQPKRVGFEEELFERLRKLWPEKYGGESMAEVRKELEYKGKKIRIVKGDITREEVDAIVNAANEYLKHGGGVAGAIVRAGGSVIQEESDRIVQERGRVPTGEAVVTSAGKLKAKYVIHTVGPVWRGGSHGEDELLYKAVYNALLRAHELKLKSISMPAISTGIFGFPKERAVGIFSKAIRDFIDQHPDTTLEEIRICNIDEETTKIFEEKFSV.

49-56 lines the ATP pocket; sequence GPPGSGKT. The 184-residue stretch at 416–599 folds into the Macro domain; the sequence is AEVRKELEYK…TKIFEEKFSV (184 aa).

It in the N-terminal section; belongs to the AAA ATPase family. RarA/MGS1/WRNIP1 subfamily.

This is an uncharacterized protein from Thermotoga maritima (strain ATCC 43589 / DSM 3109 / JCM 10099 / NBRC 100826 / MSB8).